We begin with the raw amino-acid sequence, 62 residues long: uncharacterized protein (62 aa).

Residues 37–57 (FILGVILLGVIIESITLLVVY) form a helical membrane-spanning segment.

The protein resides in the membrane. This is an uncharacterized protein from Dictyostelium discoideum (Social amoeba).